The sequence spans 1027 residues: Transient-receptor-potential-like protein (1027 aa).

The disordered stretch occupies residues 1–22 (MTKEGMLSAAGRRFSRCAPSPR). ANK repeat units lie at residues 85 to 115 (MGRT…RIGN), 117 to 141 (LLCA…ITRE), and 163 to 192 (SDIS…SIEK). Transmembrane regions (helical) follow at residues 355 to 375 (FFLY…YILM), 391 to 411 (FFYY…ATFE), 473 to 493 (FLMI…YYIF), 516 to 536 (VAEA…IYLF), 559 to 579 (FCFI…QLYW), and 640 to 660 (MFIM…IAMM). Disordered stretches follow at residues 825-929 (KRDI…TYTS) and 1008-1027 (ENVK…NVEK). Residues 855-874 (EESEEDDKSDETSSTDEEAD) show a composition bias toward acidic residues. Residues 910–923 (RASEADSKLPDRPL) show a composition bias toward basic and acidic residues. The segment covering 1008–1017 (ENVKSPSPAS) has biased composition (polar residues).

It belongs to the transient receptor (TC 1.A.4) family. STrpC subfamily.

Its subcellular location is the membrane. Its function is as follows. Could mediate calcium entry and form a calcium permeant channel. This is Transient-receptor-potential-like protein (trp-1) from Caenorhabditis elegans.